Here is a 373-residue protein sequence, read N- to C-terminus: Chorismate synthase (373 aa).

Position 46 (Arg46) interacts with NADP(+). Residues 123-125 (RSS), 251-252 (NA), Gly295, 310-314 (KPTPS), and Arg337 each bind FMN.

The protein belongs to the chorismate synthase family. The cofactor is FMNH2.

The enzyme catalyses 5-O-(1-carboxyvinyl)-3-phosphoshikimate = chorismate + phosphate. Its pathway is metabolic intermediate biosynthesis; chorismate biosynthesis; chorismate from D-erythrose 4-phosphate and phosphoenolpyruvate: step 7/7. Catalyzes the anti-1,4-elimination of the C-3 phosphate and the C-6 proR hydrogen from 5-enolpyruvylshikimate-3-phosphate (EPSP) to yield chorismate, which is the branch point compound that serves as the starting substrate for the three terminal pathways of aromatic amino acid biosynthesis. This reaction introduces a second double bond into the aromatic ring system. This is Chorismate synthase from Methanococcus maripaludis (strain DSM 14266 / JCM 13030 / NBRC 101832 / S2 / LL).